Consider the following 492-residue polypeptide: 3-octaprenyl-4-hydroxybenzoate carboxy-lyase (492 aa).

Residue N172 participates in Mn(2+) binding. Residues 175-177 (IYR), 189-191 (RWL), and 194-195 (RG) each bind prenylated FMN. E238 is a binding site for Mn(2+). The active-site Proton donor is the D287.

This sequence belongs to the UbiD family. Homohexamer. The cofactor is prenylated FMN. Requires Mn(2+) as cofactor.

It is found in the cell membrane. The catalysed reaction is a 4-hydroxy-3-(all-trans-polyprenyl)benzoate + H(+) = a 2-(all-trans-polyprenyl)phenol + CO2. It functions in the pathway cofactor biosynthesis; ubiquinone biosynthesis. Catalyzes the decarboxylation of 3-octaprenyl-4-hydroxy benzoate to 2-octaprenylphenol, an intermediate step in ubiquinone biosynthesis. This Pasteurella multocida (strain Pm70) protein is 3-octaprenyl-4-hydroxybenzoate carboxy-lyase.